The primary structure comprises 291 residues: ATP synthase gamma chain (291 aa).

Belongs to the ATPase gamma chain family. F-type ATPases have 2 components, CF(1) - the catalytic core - and CF(0) - the membrane proton channel. CF(1) has five subunits: alpha(3), beta(3), gamma(1), delta(1), epsilon(1). CF(0) has three main subunits: a, b and c.

Its subcellular location is the cell inner membrane. Functionally, produces ATP from ADP in the presence of a proton gradient across the membrane. The gamma chain is believed to be important in regulating ATPase activity and the flow of protons through the CF(0) complex. This Cupriavidus pinatubonensis (strain JMP 134 / LMG 1197) (Cupriavidus necator (strain JMP 134)) protein is ATP synthase gamma chain.